The chain runs to 415 residues: Serine hydroxymethyltransferase (415 aa).

(6S)-5,6,7,8-tetrahydrofolate is bound by residues leucine 117 and 121–123; that span reads GHL. The residue at position 226 (lysine 226) is an N6-(pyridoxal phosphate)lysine. (6S)-5,6,7,8-tetrahydrofolate-binding positions include glutamate 241 and 349 to 351; that span reads SPF.

This sequence belongs to the SHMT family. In terms of assembly, homodimer. Pyridoxal 5'-phosphate serves as cofactor.

Its subcellular location is the cytoplasm. The enzyme catalyses (6R)-5,10-methylene-5,6,7,8-tetrahydrofolate + glycine + H2O = (6S)-5,6,7,8-tetrahydrofolate + L-serine. Its pathway is one-carbon metabolism; tetrahydrofolate interconversion. The protein operates within amino-acid biosynthesis; glycine biosynthesis; glycine from L-serine: step 1/1. In terms of biological role, catalyzes the reversible interconversion of serine and glycine with tetrahydrofolate (THF) serving as the one-carbon carrier. This reaction serves as the major source of one-carbon groups required for the biosynthesis of purines, thymidylate, methionine, and other important biomolecules. Also exhibits THF-independent aldolase activity toward beta-hydroxyamino acids, producing glycine and aldehydes, via a retro-aldol mechanism. The chain is Serine hydroxymethyltransferase from Geobacter sulfurreducens (strain ATCC 51573 / DSM 12127 / PCA).